Consider the following 409-residue polypeptide: Argininosuccinate synthase (409 aa).

Residue 10 to 18 participates in ATP binding; sequence AYSGGLDTS. L-citrulline is bound at residue tyrosine 87. Glycine 117 contributes to the ATP binding site. Residues threonine 119, asparagine 123, and aspartate 124 each coordinate L-aspartate. Residue asparagine 123 participates in L-citrulline binding. Arginine 127, serine 175, serine 184, glutamate 260, and tyrosine 272 together coordinate L-citrulline.

Belongs to the argininosuccinate synthase family. Type 1 subfamily. As to quaternary structure, homotetramer.

The protein resides in the cytoplasm. The catalysed reaction is L-citrulline + L-aspartate + ATP = 2-(N(omega)-L-arginino)succinate + AMP + diphosphate + H(+). It functions in the pathway amino-acid biosynthesis; L-arginine biosynthesis; L-arginine from L-ornithine and carbamoyl phosphate: step 2/3. In Rubrobacter xylanophilus (strain DSM 9941 / JCM 11954 / NBRC 16129 / PRD-1), this protein is Argininosuccinate synthase.